The following is a 542-amino-acid chain: ATP synthase subunit beta (542 aa).

Residues 1–50 (MAKTPAKAPAAAAKPAAVKKPAAPKAAAAPKAAAVATPAAKKPAAPKAAP) are compositionally biased toward low complexity. Positions 1 to 61 (MAKTPAKAPA…SKVAGTREKP (61 aa)) are disordered. ATP is bound at residue 216–223 (GGAGVGKT).

This sequence belongs to the ATPase alpha/beta chains family. In terms of assembly, F-type ATPases have 2 components, CF(1) - the catalytic core - and CF(0) - the membrane proton channel. CF(1) has five subunits: alpha(3), beta(3), gamma(1), delta(1), epsilon(1). CF(0) has three main subunits: a(1), b(2) and c(9-12). The alpha and beta chains form an alternating ring which encloses part of the gamma chain. CF(1) is attached to CF(0) by a central stalk formed by the gamma and epsilon chains, while a peripheral stalk is formed by the delta and b chains.

The protein localises to the cell inner membrane. The catalysed reaction is ATP + H2O + 4 H(+)(in) = ADP + phosphate + 5 H(+)(out). Produces ATP from ADP in the presence of a proton gradient across the membrane. The catalytic sites are hosted primarily by the beta subunits. The chain is ATP synthase subunit beta from Caulobacter sp. (strain K31).